Here is a 274-residue protein sequence, read N- to C-terminus: Large ribosomal subunit protein uL2 (274 aa).

Disordered regions lie at residues 36-61 (QKSK…HKQR) and 223-274 (VAMN…RRKR). Over residues 37–46 (KSKTGGRNSN) the composition is skewed to polar residues. Basic residues-rich tracts occupy residues 50 to 61 (TTRHRGGGHKQR) and 254 to 274 (KGHK…RRKR).

The protein belongs to the universal ribosomal protein uL2 family. Part of the 50S ribosomal subunit. Forms a bridge to the 30S subunit in the 70S ribosome.

In terms of biological role, one of the primary rRNA binding proteins. Required for association of the 30S and 50S subunits to form the 70S ribosome, for tRNA binding and peptide bond formation. It has been suggested to have peptidyltransferase activity; this is somewhat controversial. Makes several contacts with the 16S rRNA in the 70S ribosome. In Halorhodospira halophila (strain DSM 244 / SL1) (Ectothiorhodospira halophila (strain DSM 244 / SL1)), this protein is Large ribosomal subunit protein uL2.